We begin with the raw amino-acid sequence, 717 residues long: DNA-binding protein RFX2 (717 aa).

The tract at residues 1 to 28 (MQNSEGGADSPASVALRPAAQPMPASPQ) is disordered. Position 26 is a phosphoserine (Ser-26). The RFX-type winged-helix DNA-binding region spans 194 to 269 (HLQWLLDNYE…YHYYGIRLKP (76 aa)). Residues 286–318 (RQQPTHQKPRYRPAQKSDSLGDGSAHSNMHGMP) form a disordered region. The residue at position 411 (Ser-411) is a Phosphoserine. Positions 685 to 710 (DGHSSEADVDGRSLGEPLVKRERSDP) are enriched in basic and acidic residues. Positions 685–717 (DGHSSEADVDGRSLGEPLVKRERSDPSHPLQGI) are disordered.

This sequence belongs to the RFX family. Homodimer; probably only forms homodimers in testis. Heterodimer; heterodimerizes with RFX1 and RFX3.

The protein localises to the nucleus. It localises to the cytoplasm. Its function is as follows. Transcription factor that acts as a key regulator of spermatogenesis. Acts by regulating expression of genes required for the haploid phase during spermiogenesis, such as genes required for cilium assembly and function. Recognizes and binds the X-box, a regulatory motif with DNA sequence 5'-GTNRCC(0-3N)RGYAAC-3' present on promoters. Probably activates transcription of the testis-specific histone gene H1-6. In Mus musculus (Mouse), this protein is DNA-binding protein RFX2 (Rfx2).